A 678-amino-acid chain; its full sequence is Serine/threonine-protein kinase mph1 (678 aa).

2 disordered regions span residues Lys39–Leu93 and Leu114–Val209. Polar residues-rich tracts occupy residues Asp41 to Ala66 and Leu114 to Ser125. The region spanning Phe316–Pro607 is the Protein kinase domain. ATP is bound by residues Val322 to Val330 and Lys345. Asp442 acts as the Proton acceptor in catalysis.

Belongs to the protein kinase superfamily. Ser/Thr protein kinase family.

The enzyme catalyses L-seryl-[protein] + ATP = O-phospho-L-seryl-[protein] + ADP + H(+). The catalysed reaction is L-threonyl-[protein] + ATP = O-phospho-L-threonyl-[protein] + ADP + H(+). It carries out the reaction L-tyrosyl-[protein] + ATP = O-phospho-L-tyrosyl-[protein] + ADP + H(+). Functionally, involved in mitotic spindle assembly checkpoint signaling, a process that delays anaphase until chromosomes are bioriented on the spindle, and in the repair of incorrect mitotic kinetochore-spindle microtubule attachments. Phosphorylates spc7/knl1 on MELT motifs; phosphorylation is required for recruitment of the BUB1-BUB3 complex to kinetochores. In Schizosaccharomyces pombe (strain 972 / ATCC 24843) (Fission yeast), this protein is Serine/threonine-protein kinase mph1.